The chain runs to 874 residues: DNA mismatch repair protein MutS (874 aa).

Over residues 1–12 the composition is skewed to basic and acidic residues; that stretch reads MSNDRPLTHSEA. The tract at residues 1-20 is disordered; that stretch reads MSNDRPLTHSEAESSALRLG. ATP is bound at residue 661–668; that stretch reads GPNASGKS. A disordered region spans residues 854-874; the sequence is RKSSMGDPPTAPEINQGELPF.

The protein belongs to the DNA mismatch repair MutS family.

This protein is involved in the repair of mismatches in DNA. It is possible that it carries out the mismatch recognition step. This protein has a weak ATPase activity. The protein is DNA mismatch repair protein MutS of Thermosynechococcus vestitus (strain NIES-2133 / IAM M-273 / BP-1).